We begin with the raw amino-acid sequence, 203 residues long: UDP-N-acetylglucosamine transferase subunit ALG13 (203 aa).

It belongs to the glycosyltransferase 28 family. Heterodimer with ALG14 to form a functional enzyme.

It is found in the endoplasmic reticulum. It carries out the reaction an N-acetyl-alpha-D-glucosaminyl-diphospho-di-trans,poly-cis-dolichol + UDP-N-acetyl-alpha-D-glucosamine = an N,N'-diacetylchitobiosyl-diphospho-di-trans,poly-cis-dolichol + UDP + H(+). Involved in protein N-glycosylation. Essential for the second step of the dolichol-linked oligosaccharide pathway. This is UDP-N-acetylglucosamine transferase subunit ALG13 (ALG13) from Eremothecium gossypii (strain ATCC 10895 / CBS 109.51 / FGSC 9923 / NRRL Y-1056) (Yeast).